A 308-amino-acid polypeptide reads, in one-letter code: Methionyl-tRNA formyltransferase (308 aa).

Residue 110–113 participates in (6S)-5,6,7,8-tetrahydrofolate binding; sequence SLLP.

Belongs to the Fmt family.

It carries out the reaction L-methionyl-tRNA(fMet) + (6R)-10-formyltetrahydrofolate = N-formyl-L-methionyl-tRNA(fMet) + (6S)-5,6,7,8-tetrahydrofolate + H(+). Attaches a formyl group to the free amino group of methionyl-tRNA(fMet). The formyl group appears to play a dual role in the initiator identity of N-formylmethionyl-tRNA by promoting its recognition by IF2 and preventing the misappropriation of this tRNA by the elongation apparatus. The protein is Methionyl-tRNA formyltransferase of Mycobacterium sp. (strain KMS).